A 73-amino-acid chain; its full sequence is Defensin-like protein 34 (73 aa).

A signal peptide spans 1 to 25 (MASNKVSFFLVLCLCVLSTAEFGEA). 3 cysteine pairs are disulfide-bonded: cysteine 33-cysteine 59, cysteine 45-cysteine 68, and cysteine 49-cysteine 70.

This sequence belongs to the DEFL family.

It is found in the secreted. In Arabidopsis thaliana (Mouse-ear cress), this protein is Defensin-like protein 34.